Consider the following 154-residue polypeptide: Large ribosomal subunit protein uL22 (154 aa).

Belongs to the universal ribosomal protein uL22 family. As to quaternary structure, part of the 50S ribosomal subunit.

Its function is as follows. This protein binds specifically to 23S rRNA. It makes multiple contacts with different domains of the 23S rRNA in the assembled 50S subunit and ribosome. In terms of biological role, the globular domain of the protein is located near the polypeptide exit tunnel on the outside of the subunit, while an extended beta-hairpin is found that lines the wall of the exit tunnel in the center of the 70S ribosome. The polypeptide is Large ribosomal subunit protein uL22 (Methanoregula boonei (strain DSM 21154 / JCM 14090 / 6A8)).